A 575-amino-acid polypeptide reads, in one-letter code: Transcription factor COE2 (575 aa).

Residues R62–N65 form an interaction with DNA region. Residues C150 to C169 form a C5-type zinc finger. Interaction with DNA stretches follow at residues N196–N203 and N235–K238. Residues P253–T336 form the IPT/TIG domain. Polar residues predominate over residues S441–T453. The tract at residues S441 to M479 is disordered. Low complexity predominate over residues S454 to M479.

It belongs to the COE family. Forms either a homodimer or a heterodimer with a related family member. Interacts with SIX1.

Its subcellular location is the nucleus. Its function is as follows. Transcription factor that, in osteoblasts, activates the decoy receptor for RANKL, TNFRSF11B, which in turn regulates osteoclast differentiation. Acts in synergy with the Wnt-responsive LEF1/CTNNB1 pathway. Recognizes variations of the palindromic sequence 5'-ATTCCCNNGGGAATT-3'. The sequence is that of Transcription factor COE2 (EBF2) from Homo sapiens (Human).